A 419-amino-acid chain; its full sequence is Enolase (419 aa).

Q161 contacts (2R)-2-phosphoglycerate. E205 functions as the Proton donor in the catalytic mechanism. Mg(2+) is bound by residues D240, E283, and D309. (2R)-2-phosphoglycerate contacts are provided by K334, R363, S364, and K385. Residue K334 is the Proton acceptor of the active site.

This sequence belongs to the enolase family. Mg(2+) serves as cofactor.

The protein resides in the cytoplasm. The protein localises to the secreted. It is found in the cell surface. It carries out the reaction (2R)-2-phosphoglycerate = phosphoenolpyruvate + H2O. It participates in carbohydrate degradation; glycolysis; pyruvate from D-glyceraldehyde 3-phosphate: step 4/5. Catalyzes the reversible conversion of 2-phosphoglycerate (2-PG) into phosphoenolpyruvate (PEP). It is essential for the degradation of carbohydrates via glycolysis. This is Enolase from Saccharolobus solfataricus (strain ATCC 35092 / DSM 1617 / JCM 11322 / P2) (Sulfolobus solfataricus).